We begin with the raw amino-acid sequence, 607 residues long: MESRAYPLNLTLKEEQKEEEVEIQELEDGPIDMQKVQICSEGAWVPALFDEVAIYFSDEEWEVLTEQQKALYREVMRMNYETVLSLEFPFPKPDMINRLERDEECPNSDEWRLQGVTFAENEESDFRTPDWASPTNATSHFPQPQPFNSFGLRLPQDITELPEWTEGYPFYMAMGFPGYDLSADDLASKFQFSRGMRRSYDAGFKLMVVEYAESTNNCQAAKQFGVLEKNVRDWRKVKPQLQNAHAMRRAFRGPKNGRFALVDQRVAEYVRYMQAKGDPITREAMQLKALEIAQEMNIPEKGFKASLGWCRRMMRRYDLSLRHKVPVPQHLAEDLTEKLVTYQQSVLALRRTHDYEVAQMGNADETPICLEVPSRVTVDNQGEKPILVKTPGREKLRITAMLGVLADGRKLPPYIILRGTYIPPGKFPSGMEIRCHRYGWMTEDLMQDWLEVVWRRRTGAVPRQRGMLILNGFRCHATDSVKSSMENMNTDMVIIPGGLTSQLQVLDVVVYKPLNDSVRAQYSNWLLAGNLALSPTGNAKKPPLGLFLEWIMVAWNSISSESIVQGFRKCHISSNLEDEGDVLWEIEGELPKEPPKECGPESVAEGD.

Residues 8-29 adopt a coiled-coil conformation; that stretch reads LNLTLKEEQKEEEVEIQELEDG. K13 is covalently cross-linked (Glycyl lysine isopeptide (Lys-Gly) (interchain with G-Cter in SUMO2)). The KRAB domain occupies 47-118; sequence ALFDEVAIYF…DEWRLQGVTF (72 aa). One can recognise an HTH CENPB-type domain in the interval 250–323; it reads AFRGPKNGRF…MRRYDLSLRH (74 aa). Positions 355-567 constitute a DDE-1 domain; the sequence is YEVAQMGNAD…ISSESIVQGF (213 aa). K384 participates in a covalent cross-link: Glycyl lysine isopeptide (Lys-Gly) (interchain with G-Cter in SUMO2). The segment at 588-607 is disordered; the sequence is GELPKEPPKECGPESVAEGD. The span at 589–599 shows a compositional bias: basic and acidic residues; it reads ELPKEPPKECG.

It is found in the nucleus. This Mus musculus (Mouse) protein is Pogo transposable element with KRAB domain (Pogk).